The following is a 486-amino-acid chain: MACKSPAGAPFEYRIADINLHVLGRKELTLAEKEMPGLMVLRERYSASKPLKGVRISGSLHMTVQTAVLIETLTALGADVRWASCNIFSTQDTAAAAIVVGPTGTPEKPAGIPVFAWKGETLPEYWENTYRALTWPDGQGPQQVVDDGGDATLLISKGFEFETAGAVPEPTEADNLEYRCVLATLKQVFNQDKNHWHTVAAGMNGVSEETTTGVHRLYQLEKEGKLLFPAINVNDAVTKSKFDNIYGCRHSLIDGINRASDVMIGGKTALVMGYGDVGKGCAQSLRGQGARVIITEVDPICALQAVMEGYQVRRIEEVVKDVDIFVTCTGNCDIISVDMMAQMKDKAIVGNIGHFDNEIDTDGLMKYPGIKHIPIKPEYDMWEFPDGHAILLLAEGRLLNLGCATGHPSFVMSMSFTNQTLAQLDLYEKRGNLEMKVYTLPKHLDEEVVRLHLGSLDVHLTKLTQKQADYINVPVEGPYKSDAYRY.

Positions 63, 147, and 209 each coordinate substrate. 210 to 212 is a binding site for NAD(+); it reads TTT. Lysine 239 and aspartate 243 together coordinate substrate. NAD(+) contacts are provided by residues asparagine 244, 273–278, glutamate 296, asparagine 331, 352–354, and asparagine 400; these read GYGDVG and IGH.

Belongs to the adenosylhomocysteinase family. It depends on NAD(+) as a cofactor.

The catalysed reaction is S-adenosyl-L-homocysteine + H2O = L-homocysteine + adenosine. Its pathway is amino-acid biosynthesis; L-homocysteine biosynthesis; L-homocysteine from S-adenosyl-L-homocysteine: step 1/1. In terms of biological role, adenosylhomocysteine is a competitive inhibitor of S-adenosyl-L-methionine-dependent methyl transferase reactions; therefore adenosylhomocysteinase may play a key role in the control of methylations via regulation of the intracellular concentration of adenosylhomocysteine. The polypeptide is Adenosylhomocysteinase (Trichomonas vaginalis).